Reading from the N-terminus, the 2471-residue chain is MKQNKINKAEILQVDDKHVEENLVAIVGVGFRLPSGSIENERNNTPQTLWNNLINGFDGVVKTSERFNDNFFKNHEIANNYSGLLPLDEVKSFDPLFFGINPNEAPTIDPIQRLLLKCTWEALEDSLIDPISIKGTDTSVFIGCTESDYHNINKNEVKSNVFSSLNHAISNRISYCYDLHGNSITLDTACSSSLNAIALGYDSIKNKKSKMSIVGGVNILLDSYFFKAYSSLNILSKSNGRCKSFDASADGYVRSECIGVVVLKNLKDAIKDGNRIYCTINGASANVDGIGYSDKSNFYSPSSISQSENLKNAIQSTNGTVKPSDIDYVEAHGTGTPTGDPIEVEGISKVFKDTRSTDTPLLIGSFKSNIGHCEAASGIASLIKCCLMYKNKCFAPNIHFKTPNPAIKFKEWNLKVVTEPIPFNKFKNTSMVVNNFGATGSNCCLVLSQFNYNTINNNINNHNNNHNHNHNHNNIKINNYLIPFSANSVESLKKYQSLIIENKEYESQYSFEEFVKNQIYNKSTSLYQRSVIVAKDWNDFNNVENQVKYQTSSSTSSNITITNKNNNPITVFVFCGQGSQYNTMALELYKNEKVFRNSMDMLDNKMKNYFGYSILEKLRAIQDSDKCSVHEQTMAQPSTVIIQVSLYELYKHWGIKASFMLGHSLGEVTTAYCSGMIDIDQLCYLIYHRSTLQIRTNGSGKMLSINISSDEYKTNYMSRYPTIEIACYNSPSSIVIAGNEQILNEISKELKEKEIFSAMLGSLSSFHTSSQNIIKDDILNLNIQSSQPVIPTFSTVTSNLFNESTIFDSEYFFDNISKPVSFTQTISNLYKHIEDNQIGSNIVFIEIAPHPTLSFYLKQMIPKQSQYFRNGESISVYSTLHKKKNDVEEFQKSISQLFCDDAYDINFKCQFNNINSNIEAISNFNLPLYQWDDQHYWLNKSIEHKNNLIGPPISILGNSMQDSNPFIKSYQTIIDTGKDAFKYLKGHNVSDKCYFPGTGYIDNIFKLYPNQDLTINSIEFKVPFVLTDGIGQCLQTNVYQTGKSEYRAQFHLKDEMNNQWINTSNSNFHLNSNDNYHEEKQKLDIQDIKQTKCNLSSIPWDEFYSLMKTQLGANFYGIFSKVVECYIGDNCSLTEISLELPENFHDEQSFFNCPLIDACFHGTVILYIQKNCKIVTDKVEGLRYYASNIPKNRDEHSSIFIYSTLKSSPSDDLLSSSIVVMLEDGTVIIEVDNLVVKSLTPVKDPLLIETPSDFIYTPYLQSKDSQIQSPLEFKSIYQNNQVDDGLLIPNVVIETIKPLINRKMEFRILEFGGNNLSKSTLLLNEINSLLEENPHYEIDIEYTWSDNNSSILKDAKLELSKVDKGYLSILYRSLGLDVDNSLLEKQKLNPSYYDLIIVSNISNLTKDIEYSLNQIYQILTPNGYLIINEQQQQQQQQQQQQQQQQQQQQQLLNNENNKESLKNLLVNCNFNSDIMIKSSSISDSDIKSIIIQAQKPSLKLQPKTINTFDQVILYCYQDEQLQQQQLINKFENHYNNCKIIKVSTIEEFYKLSTTITNNSIIYFIKSIEQLTLENFKSVTFEYVQINQKLYELKSKCTHVLITCDSQSSNYLSSSVLGAARYFDEIPTLQLFTLDFDKDSLTNDLDLFKTIDYLINPKNNIQREFYIKNSGTVYFEMYKKELKNLKNSYKSESYHDLSKQQDQLVSKLDEHFEYQLNSKQIDLEPYEIEVKVKATGINYKDYLKYNEMIKVNEAGIGFDFSGVVSRVGIKSSKEFKVGDQVYGIAYETSSSHIIIDSLLACHKPSKITHVQAASIPAVYSTSLYCLYDVGNLRDEESVLIHSGSGGVGLSGLEILKSNNHSSPIFVTVGSEEKKQYLINTYGDLITGIYSTRDTNYQKQIKNKLIELGYETHGVDLIINTLSSEFMDTNFKCLNPKGRIVDLTTTHLNPNEFIDNSRYRYNIGYNSIEILKVGKSTIKKLLQSISKSIENETLNALIPITEFSNSNIKKSIESIKERKHVGKIVISHDTDIIDKLIEKESMIDYSILKSDYKIKNLGKNVLVTGQTGLILEVLKWITKYNSTVENIIILSKSSLKWELEFLMNYNNNNNNNNNNNKIKYHFKKCDISNWNLINKTIDQVLKDNPTITNIDSIFHFAALQINKKLKDIDMNSLNVSHSAKTFGAVNLHNLSIKRDWKIINFILASSVVSVLGSFDQCSYVSACCVVDSLSQYRKSIGLPSFTINIGGVSDRGYLSRHKLVEAVLGGQGVELISPNQLLGTLDLQIQNPNMPTNAFVNNFNWPLFKSFKQKLHQKFDFILNPINVDNSISMENDTNQSSSSTNVKNKFLNKVSELLSIDPSKINTNIKMINYGADSLITVQLKNWVDKEWSPHLITIQQIQSNSIGMVYQIINDSLDKKKKEMDEKLLPITAKTTTTTKNDPNDKTEYKYIAGGDCCREFSIKFHYSSVVNFII.

Residues 21 to 449 (ENLVAIVGVG…GSNCCLVLSQ (429 aa)) form the Ketosynthase family 3 (KS3) domain. Active-site for beta-ketoacyl synthase activity residues include cysteine 190, histidine 332, and histidine 372. The segment at 654 to 687 (GIKASFMLGHSLGEVTTAYCSGMIDIDQLCYLIY) is acyl/malonyl transferase. Serine 664 (for acyl/malonyl transferase activity) is an active-site residue. An N-terminal hotdog fold region spans residues 953 to 1075 (ISILGNSMQD…SNFHLNSNDN (123 aa)). The PKS/mFAS DH domain occupies 953 to 1245 (ISILGNSMQD…VKSLTPVKDP (293 aa)). The active-site Proton acceptor; for dehydratase activity is histidine 987. The C-terminal hotdog fold stretch occupies residues 1094–1245 (NLSSIPWDEF…VKSLTPVKDP (152 aa)). Aspartate 1157 functions as the Proton donor; for dehydratase activity in the catalytic mechanism. Residues 1426-1469 (IINEQQQQQQQQQQQQQQQQQQQQQLLNNENNKESLKNLLVNCN) are a coiled coil. The 78-residue stretch at 2336–2413 (SSSTNVKNKF…MVYQIINDSL (78 aa)) folds into the Carrier domain. The residue at position 2373 (serine 2373) is an O-(pantetheine 4'-phosphoryl)serine.

Pantetheine 4'-phosphate serves as cofactor.

Its function is as follows. Probable polyketide synthase. This Dictyostelium discoideum (Social amoeba) protein is Probable polyketide synthase 24 (pks24).